The chain runs to 777 residues: Glucocorticoid receptor (777 aa).

Basic and acidic residues predominate over residues 1 to 14; it reads MDSKESLTPGKEEN. The segment at 1–23 is disordered; that stretch reads MDSKESLTPGKEENPSSVLTQER. The modulating stretch occupies residues 1 to 420; that stretch reads MDSKESLTPG…TATTGPPPKL (420 aa). T8 bears the Phosphothreonine mark. Omega-N-methylarginine is present on R23. A phosphoserine mark is found at S45, S113, S134, and S141. A disordered region spans residues 130-182; that stretch reads NRSTSVPENPKSSASSSVSAAPKEKEFPKTHSDVSSEQQNLKGQTGTNGGNVK. The span at 134 to 150 shows a compositional bias: low complexity; the sequence is SVPENPKSSASSSVSAA. Residues 151–163 show a composition bias toward basic and acidic residues; it reads PKEKEFPKTHSDV. Polar residues predominate over residues 164–174; sequence SSEQQNLKGQT. Phosphoserine occurs at positions 203, 211, and 226. K258 participates in a covalent cross-link: Glycyl lysine isopeptide (Lys-Gly) (interchain with G-Cter in SUMO2). S267 bears the Phosphoserine mark. Residues K277 and K293 each participate in a glycyl lysine isopeptide (Lys-Gly) (interchain with G-Cter in SUMO); alternate cross-link. Residues K277 and K293 each participate in a glycyl lysine isopeptide (Lys-Gly) (interchain with G-Cter in SUMO2); alternate cross-link. The segment covering 394-414 has biased composition (low complexity); it reads SSPSMRPDVSSPPSSSSTATT. Residues 394 to 415 form a disordered region; the sequence is SSPSMRPDVSSPPSSSSTATTG. At S404 the chain carries Phosphoserine. Residue K419 forms a Glycyl lysine isopeptide (Lys-Gly) (interchain with G-Cter in ubiquitin) linkage. 2 NR C4-type zinc fingers span residues 421–441 and 457–481; these read CLVC…CGSC and CAGR…YRKC. The nuclear receptor DNA-binding region spans 421–486; the sequence is CLVCSDEASG…RYRKCLQAGM (66 aa). K480, K492, K494, and K495 each carry N6-acetyllysine. The interaction with CLOCK stretch occupies residues 485–777; the sequence is GMNLEARKTK…NIKKLLFHQK (293 aa). The interval 487–523 is hinge; it reads NLEARKTKKKIKGIQQATTGVSQETSENPANKTIVPA. One can recognise an NR LBD domain in the interval 524 to 758; the sequence is TLPQLTPTLV…FPEMLAEIIT (235 aa). The segment at 532 to 697 is interaction with CRY1; that stretch reads LVSLLEVIEP…EIRMTYIKEL (166 aa). A Glycyl lysine isopeptide (Lys-Gly) (interchain with G-Cter in SUMO) cross-link involves residue K703.

This sequence belongs to the nuclear hormone receptor family. NR3 subfamily. As to quaternary structure, heteromultimeric cytoplasmic complex with HSP90AA1, HSPA1A/HSPA1B, and FKBP5 or another immunophilin such as PPID, STIP1, or the immunophilin homolog PPP5C. Upon ligand binding FKBP5 dissociates from the complex and FKBP4 takes its place, thereby linking the complex to dynein and mediating transport to the nucleus, where the complex dissociates. Probably forms a complex composed of chaperones HSP90 and HSP70, co-chaperones CDC37, PPP5C, TSC1 and client protein TSC2, CDK4, AKT, RAF1 and NR3C1; this complex does not contain co-chaperones STIP1/HOP and PTGES3/p23. Directly interacts with UNC45A. Binds to DNA as a homodimer, and as heterodimer with NR3C2 or the retinoid X receptor. Binds STAT5A and STAT5B homodimers and heterodimers. Interacts with NRIP1, POU2F1, POU2F2 and TRIM28. Interacts with several coactivator complexes, including the SMARCA4 complex, CREBBP/EP300, TADA2L (Ada complex) and p160 coactivators such as NCOA2 and NCOA6. Interaction with BAG1 inhibits transactivation. Interacts with HEXIM1 and TGFB1I1. Interacts with NCOA1. Interacts with NCOA3, SMARCA4, SMARCC1, SMARCD1, and SMARCE1. Interacts with CLOCK, CRY1 and CRY2 in a ligand-dependent fashion. Interacts with CIART. Interacts with RWDD3. Interacts with UBE2I/UBC9 and this interaction is enhanced in the presence of RWDD3. Interacts with GRIP1. Interacts with NR4A3 (via nuclear receptor DNA-binding domain), represses transcription activity of NR4A3 on the POMC promoter Nur response element (NurRE). Directly interacts with PNRC2 to attract and form a complex with UPF1 and DCP1A; the interaction leads to rapid mRNA degradation. Interacts with GSK3B. Interacts with FNIP1 and FNIP2. Interacts (via C-terminus) with HNRNPU (via C-terminus). Interacts with MCM3AP. Interacts (via domain NR LBD) with HSP90AA1 and HSP90AB1. In the absence of hormonal ligand, interacts with TACC1. Interacts (via NR LBD domain) with ZNF764 (via KRAB domain); the interaction regulates transcription factor activity of NR3C1 by directing its actions toward certain biologic pathways. Acetylation by CLOCK reduces its binding to glucocorticoid response elements and its transcriptional activity. In terms of processing, increased proteasome-mediated degradation in response to glucocorticoids. Post-translationally, phosphorylated in the absence of hormone; becomes hyperphosphorylated in the presence of glucocorticoid. The Ser-203, Ser-226 and Ser-404-phosphorylated forms are mainly cytoplasmic, and the Ser-211-phosphorylated form is nuclear. Phosphorylation at Ser-211 increases transcriptional activity. Phosphorylation at Ser-203, Ser-226 and Ser-404 decreases signaling capacity. Phosphorylation at Ser-404 may protect from glucocorticoid-induced apoptosis. Phosphorylation at Ser-203 and Ser-211 is not required in regulation of chromosome segregation. May be dephosphorylated by PPP5C, attenuates NR3C1 action. Ubiquitinated by UBR5, leading to its degradation: UBR5 specifically recognizes and binds ligand-bound NR3C1 when it is not associated with coactivators (NCOAs). In presence of NCOAs, the UBR5-degron is not accessible, preventing its ubiquitination and degradation. In terms of processing, sumoylation at Lys-277 and Lys-293 negatively regulates its transcriptional activity. Sumoylation at Lys-703 positively regulates its transcriptional activity in the presence of RWDD3. Sumoylation at Lys-277 and Lys-293 is dispensable whereas sumoylation at Lys-703 is critical for the stimulatory effect of RWDD3 on its transcriptional activity. Heat shock increases sumoylation in a RWWD3-dependent manner.

The protein localises to the cytoplasm. Its subcellular location is the nucleus. It localises to the mitochondrion. The protein resides in the cytoskeleton. It is found in the spindle. The protein localises to the microtubule organizing center. Its subcellular location is the centrosome. It localises to the chromosome. The protein resides in the nucleoplasm. Its function is as follows. Receptor for glucocorticoids (GC). Has a dual mode of action: as a transcription factor that binds to glucocorticoid response elements (GRE), both for nuclear and mitochondrial DNA, and as a modulator of other transcription factors. Affects inflammatory responses, cellular proliferation and differentiation in target tissues. Involved in chromatin remodeling. Plays a role in rapid mRNA degradation by binding to the 5' UTR of target mRNAs and interacting with PNRC2 in a ligand-dependent manner which recruits the RNA helicase UPF1 and the mRNA-decapping enzyme DCP1A, leading to RNA decay. Could act as a coactivator for STAT5-dependent transcription upon growth hormone (GH) stimulation and could reveal an essential role of hepatic GR in the control of body growth. Mediates glucocorticoid-induced apoptosis. Promotes accurate chromosome segregation during mitosis. May act as a tumor suppressor. May play a negative role in adipogenesis through the regulation of lipolytic and antilipogenic gene expression. In Aotus nancymaae (Ma's night monkey), this protein is Glucocorticoid receptor (NR3C1).